Reading from the N-terminus, the 294-residue chain is 4-hydroxy-tetrahydrodipicolinate synthase (294 aa).

A pyruvate-binding site is contributed by Thr46. Catalysis depends on Tyr135, which acts as the Proton donor/acceptor. Lys164 serves as the catalytic Schiff-base intermediate with substrate. Residue Ile205 participates in pyruvate binding.

This sequence belongs to the DapA family. As to quaternary structure, homotetramer; dimer of dimers.

It localises to the cytoplasm. The enzyme catalyses L-aspartate 4-semialdehyde + pyruvate = (2S,4S)-4-hydroxy-2,3,4,5-tetrahydrodipicolinate + H2O + H(+). It participates in amino-acid biosynthesis; L-lysine biosynthesis via DAP pathway; (S)-tetrahydrodipicolinate from L-aspartate: step 3/4. Catalyzes the condensation of (S)-aspartate-beta-semialdehyde [(S)-ASA] and pyruvate to 4-hydroxy-tetrahydrodipicolinate (HTPA). In Nitratiruptor sp. (strain SB155-2), this protein is 4-hydroxy-tetrahydrodipicolinate synthase.